The sequence spans 223 residues: MAKHSHDHTHDHHDRPRRVRKPGEPLRIGVGGPVGSGKTALVAAICRQLRDELSLAVLTNDIYTTEDADFLRKHAVLPDSRITAVQTGGCPHTAIRDDITANLDAIDDLIAAHDALDLILVESGGDNLTATFSSGLVDVQIFVIDVAGGDKVPRKGGPGVTFSDLLVVNKTDLAPLVGADLKVMARDAEAVRDGRPTVLQSLTEDPAATKVLDWVRSQLAAAG.

Positions 1–31 are disordered; the sequence is MAKHSHDHTHDHHDRPRRVRKPGEPLRIGVG. Residue 32–39 participates in GTP binding; sequence GPVGSGKT.

This sequence belongs to the SIMIBI class G3E GTPase family. UreG subfamily. Homodimer. UreD, UreF and UreG form a complex that acts as a GTP-hydrolysis-dependent molecular chaperone, activating the urease apoprotein by helping to assemble the nickel containing metallocenter of UreC. The UreE protein probably delivers the nickel.

It is found in the cytoplasm. Facilitates the functional incorporation of the urease nickel metallocenter. This process requires GTP hydrolysis, probably effectuated by UreG. This chain is Urease accessory protein UreG, found in Mycobacterium marinum (strain ATCC BAA-535 / M).